The sequence spans 175 residues: Cytidylate kinase (175 aa).

Residue 7-15 (GLPGSGTTT) coordinates ATP.

The protein belongs to the cytidylate kinase family. Type 2 subfamily.

The protein resides in the cytoplasm. The enzyme catalyses CMP + ATP = CDP + ADP. It carries out the reaction dCMP + ATP = dCDP + ADP. In Methanococcoides burtonii (strain DSM 6242 / NBRC 107633 / OCM 468 / ACE-M), this protein is Cytidylate kinase.